The following is a 342-amino-acid chain: L-lysine 2,3-aminomutase (342 aa).

The 224-residue stretch at 106-329 (HKYQNRALLL…PRLAREIGGE (224 aa)) folds into the Radical SAM core domain. Residues cysteine 120, cysteine 124, and cysteine 127 each coordinate [4Fe-4S] cluster. Residue lysine 332 is modified to N6-(pyridoxal phosphate)lysine.

This sequence belongs to the radical SAM superfamily. KamA family. Requires [4Fe-4S] cluster as cofactor. Pyridoxal 5'-phosphate serves as cofactor.

It catalyses the reaction L-lysine = D-beta-lysine. With EpmA is involved in the beta-lysylation step of the post-translational modification of translation elongation factor P (EF-P) on 'Lys-34'. EpmB appears to act before EpmA. Displays lysine 2,3-aminomutase activity, producing (R)-beta-lysine from (S)-alpha-lysine (L-lysine). This chain is L-lysine 2,3-aminomutase (epmB), found in Salmonella typhimurium (strain LT2 / SGSC1412 / ATCC 700720).